Reading from the N-terminus, the 117-residue chain is uncharacterized protein (117 aa).

The protein to H.influenzae HI_1162 and to HI_0925.

This is an uncharacterized protein from Escherichia coli (strain K12).